The sequence spans 107 residues: Nucleoid-associated protein RBE_0048 (107 aa).

The protein belongs to the YbaB/EbfC family. In terms of assembly, homodimer.

It is found in the cytoplasm. The protein localises to the nucleoid. In terms of biological role, binds to DNA and alters its conformation. May be involved in regulation of gene expression, nucleoid organization and DNA protection. The polypeptide is Nucleoid-associated protein RBE_0048 (Rickettsia bellii (strain RML369-C)).